The sequence spans 224 residues: Germin-like protein 8-9 (224 aa).

Residues Met1–Ala22 form the signal peptide. A disulfide bridge links Cys32 with Cys47. Positions Ala62–Asp212 constitute a Cupin type-1 domain. N-linked (GlcNAc...) asparagine glycosylation occurs at Asn76. Mn(2+)-binding residues include His109, His111, and Glu116. Asn135 carries an N-linked (GlcNAc...) asparagine glycan. Position 157 (His157) interacts with Mn(2+).

The protein belongs to the germin family. As to quaternary structure, oligomer (believed to be a pentamer but probably hexamer).

The protein localises to the secreted. The protein resides in the extracellular space. It is found in the apoplast. In terms of biological role, plays a role in broad-spectrum disease resistance. Probably has no oxalate oxidase activity even if the active site is conserved. This chain is Germin-like protein 8-9, found in Oryza sativa subsp. japonica (Rice).